A 377-amino-acid chain; its full sequence is Ribosomal RNA large subunit methyltransferase G (377 aa).

This sequence belongs to the methyltransferase superfamily. RlmG family.

The protein resides in the cytoplasm. It carries out the reaction guanosine(1835) in 23S rRNA + S-adenosyl-L-methionine = N(2)-methylguanosine(1835) in 23S rRNA + S-adenosyl-L-homocysteine + H(+). Functionally, specifically methylates the guanine in position 1835 (m2G1835) of 23S rRNA. In Shewanella sp. (strain ANA-3), this protein is Ribosomal RNA large subunit methyltransferase G.